Here is a 651-residue protein sequence, read N- to C-terminus: Peptidoglycan D,D-transpeptidase MrdA (651 aa).

Residues 30 to 50 (LVAFLGILLLTGVLFTNIYQL) form a helical membrane-spanning segment. S338 (acyl-ester intermediate) is an active-site residue.

This sequence belongs to the transpeptidase family. MrdA subfamily.

Its subcellular location is the cell inner membrane. The catalysed reaction is Preferential cleavage: (Ac)2-L-Lys-D-Ala-|-D-Ala. Also transpeptidation of peptidyl-alanyl moieties that are N-acyl substituents of D-alanine.. Its pathway is cell wall biogenesis; peptidoglycan biosynthesis. Catalyzes cross-linking of the peptidoglycan cell wall. The protein is Peptidoglycan D,D-transpeptidase MrdA of Haemophilus influenzae (strain ATCC 51907 / DSM 11121 / KW20 / Rd).